The chain runs to 188 residues: HTH-type transcriptional regulator LmrA (188 aa).

Positions 4 to 64 (GDSREKILSA…IEAVNEMKEY (61 aa)) constitute an HTH tetR-type domain. The segment at residues 27-46 (GLNQIIKESGAPKGSLYYHF) is a DNA-binding region (H-T-H motif).

In terms of biological role, acts as a repressor of the lincomycin-resistance (lmrAB) and yxaGH operons. The polypeptide is HTH-type transcriptional regulator LmrA (lmrA) (Bacillus subtilis (strain 168)).